The primary structure comprises 474 residues: ATP-dependent rRNA helicase RRP3 (474 aa).

Over residues 1-10 (MPSMKRRKLS) the composition is skewed to basic residues. Residues 1–43 (MPSMKRRKLSHTPPQGEAEDGFSDSETSQASLQETPGNDEKIE) form a disordered region. The segment covering 24–36 (DSETSQASLQETP) has biased composition (polar residues). Positions 48-76 (KSFKDLGIIDSLCEACDSLGYKAPTQIQA) match the Q motif motif. Residues 79–250 (IPLALQGRDL…RASLSNPLRV (172 aa)) form the Helicase ATP-binding domain. Residue 92 to 99 (AETGSGKT) participates in ATP binding. The short motif at 198 to 201 (DEAD) is the DEAD box element. Positions 278–422 (YLIYLLNEFP…EYKVEKEEVM (145 aa)) constitute a Helicase C-terminal domain. A disordered region spans residues 442-474 (LHENRGKKGATLRNRRIGKGAKRSRDEMDREEG). Basic residues predominate over residues 448-463 (KKGATLRNRRIGKGAK). Over residues 464–474 (RSRDEMDREEG) the composition is skewed to basic and acidic residues.

This sequence belongs to the DEAD box helicase family. DDX47/RRP3 subfamily. Interacts with the SSU processome.

It is found in the nucleus. The enzyme catalyses ATP + H2O = ADP + phosphate + H(+). In terms of biological role, ATP-dependent rRNA helicase required for pre-ribosomal RNA processing. Involved in the maturation of the 35S-pre-rRNA and to its cleavage to mature 18S rRNA. The polypeptide is ATP-dependent rRNA helicase RRP3 (Coccidioides immitis (strain RS) (Valley fever fungus)).